The sequence spans 275 residues: Formamidopyrimidine-DNA glycosylase (275 aa).

The active-site Schiff-base intermediate with DNA is Pro2. The Proton donor role is filled by Glu3. Catalysis depends on Lys58, which acts as the Proton donor; for beta-elimination activity. DNA is bound by residues His91, Arg109, and Lys154. The FPG-type zinc-finger motif lies at 240 to 274 (AVYERAGLACRVCGTPIRRLVQGQRATYFCPHCQK). Arg264 serves as the catalytic Proton donor; for delta-elimination activity.

This sequence belongs to the FPG family. In terms of assembly, monomer. It depends on Zn(2+) as a cofactor.

The enzyme catalyses Hydrolysis of DNA containing ring-opened 7-methylguanine residues, releasing 2,6-diamino-4-hydroxy-5-(N-methyl)formamidopyrimidine.. The catalysed reaction is 2'-deoxyribonucleotide-(2'-deoxyribose 5'-phosphate)-2'-deoxyribonucleotide-DNA = a 3'-end 2'-deoxyribonucleotide-(2,3-dehydro-2,3-deoxyribose 5'-phosphate)-DNA + a 5'-end 5'-phospho-2'-deoxyribonucleoside-DNA + H(+). In terms of biological role, involved in base excision repair of DNA damaged by oxidation or by mutagenic agents. Acts as a DNA glycosylase that recognizes and removes damaged bases. Has a preference for oxidized purines, such as 7,8-dihydro-8-oxoguanine (8-oxoG). Has AP (apurinic/apyrimidinic) lyase activity and introduces nicks in the DNA strand. Cleaves the DNA backbone by beta-delta elimination to generate a single-strand break at the site of the removed base with both 3'- and 5'-phosphates. The sequence is that of Formamidopyrimidine-DNA glycosylase from Bordetella avium (strain 197N).